A 377-amino-acid polypeptide reads, in one-letter code: Nitric oxide reductase FlRd-NAD(+) reductase (377 aa).

Belongs to the FAD-dependent oxidoreductase family. Requires FAD as cofactor.

It localises to the cytoplasm. The catalysed reaction is 2 reduced [nitric oxide reductase rubredoxin domain] + NAD(+) + H(+) = 2 oxidized [nitric oxide reductase rubredoxin domain] + NADH. The protein operates within nitrogen metabolism; nitric oxide reduction. One of at least two accessory proteins for anaerobic nitric oxide (NO) reductase. Reduces the rubredoxin moiety of NO reductase. The protein is Nitric oxide reductase FlRd-NAD(+) reductase of Salmonella paratyphi B (strain ATCC BAA-1250 / SPB7).